We begin with the raw amino-acid sequence, 169 residues long: Peptide deformylase (169 aa).

The Fe cation site is built by Cys-91 and His-133. Glu-134 is a catalytic residue. His-137 provides a ligand contact to Fe cation.

Belongs to the polypeptide deformylase family. The cofactor is Fe(2+).

It catalyses the reaction N-terminal N-formyl-L-methionyl-[peptide] + H2O = N-terminal L-methionyl-[peptide] + formate. Functionally, removes the formyl group from the N-terminal Met of newly synthesized proteins. Requires at least a dipeptide for an efficient rate of reaction. N-terminal L-methionine is a prerequisite for activity but the enzyme has broad specificity at other positions. This Escherichia coli (strain K12 / DH10B) protein is Peptide deformylase.